A 366-amino-acid chain; its full sequence is Anthranilate phosphoribosyltransferase (366 aa).

5-phospho-alpha-D-ribose 1-diphosphate-binding positions include Gly-103, 106-107 (GD), Thr-111, 113-116 (NLST), 131-139 (KHGNRASSS), and Gly-143. Residue Gly-103 coordinates anthranilate. Residue Ser-115 coordinates Mg(2+). Asn-134 is a binding site for anthranilate. Residue Arg-189 coordinates anthranilate. Asp-247 and Glu-248 together coordinate Mg(2+).

The protein belongs to the anthranilate phosphoribosyltransferase family. Homodimer. Mg(2+) is required as a cofactor.

The catalysed reaction is N-(5-phospho-beta-D-ribosyl)anthranilate + diphosphate = 5-phospho-alpha-D-ribose 1-diphosphate + anthranilate. It functions in the pathway amino-acid biosynthesis; L-tryptophan biosynthesis; L-tryptophan from chorismate: step 2/5. Functionally, catalyzes the transfer of the phosphoribosyl group of 5-phosphorylribose-1-pyrophosphate (PRPP) to anthranilate to yield N-(5'-phosphoribosyl)-anthranilate (PRA). This is Anthranilate phosphoribosyltransferase from Mycobacterium leprae (strain Br4923).